The following is a 192-amino-acid chain: Protein GrpE (192 aa).

The interval 1–41 (MSKEEFPHEKDLKDEVTPDKAPKKDPKAAPKEEVKENPVEN) is disordered.

Belongs to the GrpE family. In terms of assembly, homodimer.

The protein localises to the cytoplasm. Participates actively in the response to hyperosmotic and heat shock by preventing the aggregation of stress-denatured proteins, in association with DnaK and GrpE. It is the nucleotide exchange factor for DnaK and may function as a thermosensor. Unfolded proteins bind initially to DnaJ; upon interaction with the DnaJ-bound protein, DnaK hydrolyzes its bound ATP, resulting in the formation of a stable complex. GrpE releases ADP from DnaK; ATP binding to DnaK triggers the release of the substrate protein, thus completing the reaction cycle. Several rounds of ATP-dependent interactions between DnaJ, DnaK and GrpE are required for fully efficient folding. The polypeptide is Protein GrpE (Lactobacillus johnsonii (strain CNCM I-12250 / La1 / NCC 533)).